The sequence spans 79 residues: Cyclin-dependent kinases regulatory subunit 2 (79 aa).

This sequence belongs to the CKS family. Forms a homohexamer that can probably bind six kinase subunits.

Functionally, binds to the catalytic subunit of the cyclin dependent kinases and is essential for their biological function. The protein is Cyclin-dependent kinases regulatory subunit 2 (cks2) of Xenopus laevis (African clawed frog).